The chain runs to 275 residues: 4-hydroxy-tetrahydrodipicolinate reductase (275 aa).

NAD(+)-binding positions include 13 to 18 (GAAGKM) and 108 to 110 (GTT). Residue histidine 164 is the Proton donor/acceptor of the active site. Histidine 165 serves as a coordination point for (S)-2,3,4,5-tetrahydrodipicolinate. Lysine 168 (proton donor) is an active-site residue. 174–175 (GT) contacts (S)-2,3,4,5-tetrahydrodipicolinate.

The protein belongs to the DapB family.

The protein resides in the cytoplasm. It catalyses the reaction (S)-2,3,4,5-tetrahydrodipicolinate + NAD(+) + H2O = (2S,4S)-4-hydroxy-2,3,4,5-tetrahydrodipicolinate + NADH + H(+). The enzyme catalyses (S)-2,3,4,5-tetrahydrodipicolinate + NADP(+) + H2O = (2S,4S)-4-hydroxy-2,3,4,5-tetrahydrodipicolinate + NADPH + H(+). It functions in the pathway amino-acid biosynthesis; L-lysine biosynthesis via DAP pathway; (S)-tetrahydrodipicolinate from L-aspartate: step 4/4. In terms of biological role, catalyzes the conversion of 4-hydroxy-tetrahydrodipicolinate (HTPA) to tetrahydrodipicolinate. This chain is 4-hydroxy-tetrahydrodipicolinate reductase, found in Acaryochloris marina (strain MBIC 11017).